A 370-amino-acid chain; its full sequence is Protein-glutamate methylesterase/protein-glutamine glutaminase of group 1 operon (370 aa).

The 118-residue stretch at 4–121 (KVLVVDDSGF…SRNPDKVKQL (118 aa)) folds into the Response regulatory domain. Residue D55 is modified to 4-aspartylphosphate. Over residues 150–180 (PASTFTSQAQTRPAAPARAAAPTPAASQSPA) the composition is skewed to low complexity. The segment at 150–183 (PASTFTSQAQTRPAAPARAAAPTPAASQSPAPKR) is disordered. The 192-residue stretch at 179–370 (PAPKRKPYKL…IGKHLVEACV (192 aa)) folds into the CheB-type methylesterase domain. Residues S194, H221, and D314 contribute to the active site.

Belongs to the CheB family. Phosphorylated by CheA. Phosphorylation of the N-terminal regulatory domain activates the methylesterase activity.

The protein localises to the cytoplasm. It carries out the reaction [protein]-L-glutamate 5-O-methyl ester + H2O = L-glutamyl-[protein] + methanol + H(+). The catalysed reaction is L-glutaminyl-[protein] + H2O = L-glutamyl-[protein] + NH4(+). Involved in chemotaxis. Part of a chemotaxis signal transduction system that modulates chemotaxis in response to various stimuli. Catalyzes the demethylation of specific methylglutamate residues introduced into the chemoreceptors (methyl-accepting chemotaxis proteins or MCP) by CheR. Also mediates the irreversible deamidation of specific glutamine residues to glutamic acid. This Pseudomonas putida (strain ATCC 47054 / DSM 6125 / CFBP 8728 / NCIMB 11950 / KT2440) protein is Protein-glutamate methylesterase/protein-glutamine glutaminase of group 1 operon.